The chain runs to 691 residues: Elongation factor G (691 aa).

A tr-type G domain is found at 10 to 284 (KRLRNIGIAA…AVVDYLPSPL (275 aa)). GTP contacts are provided by residues 19 to 26 (AHIDAGKT), 83 to 87 (DTPGH), and 137 to 140 (NKMD).

This sequence belongs to the TRAFAC class translation factor GTPase superfamily. Classic translation factor GTPase family. EF-G/EF-2 subfamily.

It is found in the cytoplasm. Functionally, catalyzes the GTP-dependent ribosomal translocation step during translation elongation. During this step, the ribosome changes from the pre-translocational (PRE) to the post-translocational (POST) state as the newly formed A-site-bound peptidyl-tRNA and P-site-bound deacylated tRNA move to the P and E sites, respectively. Catalyzes the coordinated movement of the two tRNA molecules, the mRNA and conformational changes in the ribosome. The sequence is that of Elongation factor G (fusA) from Thermus thermophilus (strain ATCC 27634 / DSM 579 / HB8).